The following is a 448-amino-acid chain: 4-hydroxybenzoate transporter PcaK (448 aa).

Topologically, residues 1 to 30 (MNSPSLPAVERLDVQAFINAQPLSPYQWRI) are cytoplasmic. The chain crosses the membrane as a helical span at residues 31 to 51 (VLLCFLIVFLDGLDTAAMGFI). The Periplasmic segment spans residues 52–67 (APALTQDWGIDRASLG). Residues 68-88 (PVMSAALIGMVFGALGSGPLA) form a helical membrane-spanning segment. Topologically, residues 89–94 (DRYGRK) are cytoplasmic. Residues 95-115 (LVLVAAVFLFGLFSLASAYST) form a helical membrane-spanning segment. At 116 to 119 (NVEQ) the chain is on the periplasmic side. A helical transmembrane segment spans residues 120-140 (LLALRFLTGLGLGAAMPNATT). At 141–152 (LLSEYTPERLKS) the chain is on the cytoplasmic side. A helical membrane pass occupies residues 153–173 (LLVTSMFCGFNLGMACGGFVS). The Periplasmic segment spans residues 174 to 184 (AKLIPLFGWHS). The helical transmembrane segment at 185-205 (LLLLGGLLPLVLAVVLLFRLP) threads the bilayer. Residues 206-261 (ESARYLVVRNRGSERVRQVLAPIAPAQVALARSFHVPEQQTVQARNVFAVIFSGTY) lie on the Cytoplasmic side of the membrane. A helical membrane pass occupies residues 262–282 (SAGTLLLWLTYFMGLVIVYLL). Over 283 to 301 (TSWLPTLMRDSGASLEQAA) the chain is Periplasmic. The helical transmembrane segment at 302–322 (FIGALFQFGGVLSAVAVGWAM) threads the bilayer. At 323–329 (DRFNPHK) the chain is on the cytoplasmic side. A helical membrane pass occupies residues 330–350 (VIGLFYLLAGVFAWCVGQSLG). A topological domain (periplasmic) is located at residue Gln-351. Residues 352–372 (VTLLATLVLLAGMCINGAQSA) traverse the membrane as a helical segment. The Cytoplasmic segment spans residues 373–398 (MPSLAARFYPTQGRATGVSWMLGIGR). Residues 399-419 (FGAILGAWIGATLLGLGWNFE) form a helical membrane-spanning segment. Topologically, residues 420–421 (QV) are periplasmic. The helical transmembrane segment at 422–442 (LTALVLPAALATAAVLLKGLV) threads the bilayer. Topologically, residues 443–448 (SHADAG) are cytoplasmic.

It belongs to the major facilitator superfamily. Aromatic acid:H(+) symporter (AAHS) (TC 2.A.1.15) family.

It is found in the cell inner membrane. Functionally, transports 4-hydroxybenzoate (4-HBA) and protocatechuate across the membrane. Driven by the proton motive force. Also functions as a chemoreceptor, which is required for chemotaxis to aromatic acids. In Pseudomonas aeruginosa (strain ATCC 15692 / DSM 22644 / CIP 104116 / JCM 14847 / LMG 12228 / 1C / PRS 101 / PAO1), this protein is 4-hydroxybenzoate transporter PcaK (pcaK).